Here is a 188-residue protein sequence, read N- to C-terminus: Peptidyl-tRNA hydrolase (188 aa).

TRNA is bound at residue tyrosine 14. Histidine 19 (proton acceptor) is an active-site residue. Positions 64, 66, and 112 each coordinate tRNA.

It belongs to the PTH family. As to quaternary structure, monomer.

The protein resides in the cytoplasm. It carries out the reaction an N-acyl-L-alpha-aminoacyl-tRNA + H2O = an N-acyl-L-amino acid + a tRNA + H(+). Functionally, hydrolyzes ribosome-free peptidyl-tRNAs (with 1 or more amino acids incorporated), which drop off the ribosome during protein synthesis, or as a result of ribosome stalling. Its function is as follows. Catalyzes the release of premature peptidyl moieties from peptidyl-tRNA molecules trapped in stalled 50S ribosomal subunits, and thus maintains levels of free tRNAs and 50S ribosomes. Releases Ala-tailed nascent peptides from stalled 50S ribosomal subunits. Non-templated Ala tailing occurs as part of the ribosome quality control (RQC) pathway. In the absence of Ala tails significantly less peptide release occurs. The Ala tail facilitates the interaction of Pth with the nascent peptide-tRNA ester bond as well as promoting nascent chain degradation; 3 Ala residues suffice to stimulate peptide release from stalled 50S ribosomal subunits. Complements a temperature-sensitive pth mutation in E.coli. The polypeptide is Peptidyl-tRNA hydrolase (Bacillus subtilis (strain 168)).